Consider the following 134-residue polypeptide: Small ribosomal subunit protein uS11 (134 aa).

The protein belongs to the universal ribosomal protein uS11 family. Part of the 30S ribosomal subunit. Interacts with proteins S7 and S18. Binds to IF-3.

In terms of biological role, located on the platform of the 30S subunit, it bridges several disparate RNA helices of the 16S rRNA. Forms part of the Shine-Dalgarno cleft in the 70S ribosome. This Micrococcus luteus (strain ATCC 4698 / DSM 20030 / JCM 1464 / CCM 169 / CCUG 5858 / IAM 1056 / NBRC 3333 / NCIMB 9278 / NCTC 2665 / VKM Ac-2230) (Micrococcus lysodeikticus) protein is Small ribosomal subunit protein uS11.